A 374-amino-acid chain; its full sequence is Carbamoyl phosphate synthase small chain (374 aa).

The interval 1-186 (MTEHAILVLE…DRNECKRAAP (186 aa)) is CPSase. The L-glutamine site is built by serine 47, glycine 237, and glycine 239. The 186-residue stretch at 189–374 (KVVAYDYGVK…RFITMMAAQS (186 aa)) folds into the Glutamine amidotransferase type-1 domain. The active-site Nucleophile is the cysteine 265. Residues leucine 266, glutamine 269, asparagine 307, glycine 309, and phenylalanine 310 each contribute to the L-glutamine site. Residues histidine 349 and glutamate 351 contribute to the active site.

Belongs to the CarA family. In terms of assembly, composed of two chains; the small (or glutamine) chain promotes the hydrolysis of glutamine to ammonia, which is used by the large (or ammonia) chain to synthesize carbamoyl phosphate. Tetramer of heterodimers (alpha,beta)4.

It catalyses the reaction hydrogencarbonate + L-glutamine + 2 ATP + H2O = carbamoyl phosphate + L-glutamate + 2 ADP + phosphate + 2 H(+). It carries out the reaction L-glutamine + H2O = L-glutamate + NH4(+). It functions in the pathway amino-acid biosynthesis; L-arginine biosynthesis; carbamoyl phosphate from bicarbonate: step 1/1. The protein operates within pyrimidine metabolism; UMP biosynthesis via de novo pathway; (S)-dihydroorotate from bicarbonate: step 1/3. In terms of biological role, small subunit of the glutamine-dependent carbamoyl phosphate synthetase (CPSase). CPSase catalyzes the formation of carbamoyl phosphate from the ammonia moiety of glutamine, carbonate, and phosphate donated by ATP, constituting the first step of 2 biosynthetic pathways, one leading to arginine and/or urea and the other to pyrimidine nucleotides. The small subunit (glutamine amidotransferase) binds and cleaves glutamine to supply the large subunit with the substrate ammonia. This is Carbamoyl phosphate synthase small chain from Xylella fastidiosa (strain Temecula1 / ATCC 700964).